A 103-amino-acid polypeptide reads, in one-letter code: UPF0134 protein MPN_484 (103 aa).

It belongs to the UPF0134 family.

This Mycoplasma pneumoniae (strain ATCC 29342 / M129 / Subtype 1) (Mycoplasmoides pneumoniae) protein is UPF0134 protein MPN_484.